A 79-amino-acid chain; its full sequence is uncharacterized protein (79 aa).

It is found in the mitochondrion. This is an uncharacterized protein from Marchantia polymorpha (Common liverwort).